The chain runs to 214 residues: GTP cyclohydrolase 1 (214 aa).

Zn(2+) is bound by residues cysteine 108, histidine 111, and cysteine 179.

This sequence belongs to the GTP cyclohydrolase I family. In terms of assembly, toroid-shaped homodecamer, composed of two pentamers of five dimers.

It carries out the reaction GTP + H2O = 7,8-dihydroneopterin 3'-triphosphate + formate + H(+). The protein operates within cofactor biosynthesis; 7,8-dihydroneopterin triphosphate biosynthesis; 7,8-dihydroneopterin triphosphate from GTP: step 1/1. This is GTP cyclohydrolase 1 from Shewanella loihica (strain ATCC BAA-1088 / PV-4).